The following is a 464-amino-acid chain: NADH dehydrogenase [ubiquinone] flavoprotein 1, mitochondrial (464 aa).

The transit peptide at 1-20 (MLATRRLLGWSLPARVSVRF) directs the protein to the mitochondrion. At lysine 81 the chain carries N6-acetyllysine; alternate. Lysine 81 is subject to N6-succinyllysine; alternate. 87-96 (GRGGAGFPTG) contributes to the NADH binding site. Lysine 104 is modified (N6-acetyllysine). 199–247 (RGAGAYICGEETALIESIEGKQGKPRLKPPFPADVGVFGCPTTVANVET) serves as a coordination point for FMN. Position 257 is an omega-N-methylarginine (arginine 257). An N6-acetyllysine modification is found at lysine 375. Residues cysteine 379, cysteine 382, cysteine 385, and cysteine 425 each coordinate [4Fe-4S] cluster.

This sequence belongs to the complex I 51 kDa subunit family. In terms of assembly, core subunit of respiratory chain NADH dehydrogenase (Complex I) which is composed of 45 different subunits. This is a component of the flavoprotein-sulfur (FP) fragment of the enzyme. Interacts with RAB5IF. FMN serves as cofactor. [4Fe-4S] cluster is required as a cofactor.

It is found in the mitochondrion inner membrane. It catalyses the reaction a ubiquinone + NADH + 5 H(+)(in) = a ubiquinol + NAD(+) + 4 H(+)(out). In terms of biological role, core subunit of the mitochondrial membrane respiratory chain NADH dehydrogenase (Complex I) which catalyzes electron transfer from NADH through the respiratory chain, using ubiquinone as an electron acceptor. Part of the peripheral arm of the enzyme, where the electrons from NADH are accepted by flavin mononucleotide (FMN) and then passed along a chain of iron-sulfur clusters by electron tunnelling to the final acceptor ubiquinone. Contains FMN, which is the initial electron acceptor as well as one iron-sulfur cluster. In Pan troglodytes (Chimpanzee), this protein is NADH dehydrogenase [ubiquinone] flavoprotein 1, mitochondrial.